The following is a 233-amino-acid chain: Large ribosomal subunit protein uL1 (233 aa).

It belongs to the universal ribosomal protein uL1 family. Part of the 50S ribosomal subunit.

Binds directly to 23S rRNA. The L1 stalk is quite mobile in the ribosome, and is involved in E site tRNA release. In terms of biological role, protein L1 is also a translational repressor protein, it controls the translation of the L11 operon by binding to its mRNA. This chain is Large ribosomal subunit protein uL1, found in Brucella canis (strain ATCC 23365 / NCTC 10854 / RM-666).